Here is a 367-residue protein sequence, read N- to C-terminus: Methionine aminopeptidase 1 (367 aa).

A C6H2-type zinc finger spans residues 3–57 (GILCASPGCGKPAKLQCPTCVNLKLETPSHFCSQECFKTFWPLHKMYHQKGQPEN). Residues cysteine 6, cysteine 11, cysteine 19, cysteine 22, cysteine 34, cysteine 38, histidine 46, and histidine 50 each contribute to the Zn(2+) site. Histidine 185 is a binding site for a protein. Zn(2+)-binding residues include aspartate 202, aspartate 213, and histidine 276. Residue histidine 283 participates in a protein binding. 2 residues coordinate Zn(2+): glutamate 309 and glutamate 340.

Belongs to the peptidase M24A family. Methionine aminopeptidase type 1 subfamily. In terms of assembly, associates with the 60S ribosomal subunit of the 80S translational complex. The cofactor is Zn(2+). It depends on Co(2+) as a cofactor. Mn(2+) serves as cofactor. Fe(2+) is required as a cofactor.

The protein localises to the cytoplasm. It carries out the reaction Release of N-terminal amino acids, preferentially methionine, from peptides and arylamides.. In terms of biological role, cotranslationally removes the N-terminal methionine from nascent proteins. The N-terminal methionine is often cleaved when the second residue in the primary sequence is small and uncharged (Met-Ala-, Cys, Gly, Pro, Ser, Thr, or Val). The chain is Methionine aminopeptidase 1 (metap1) from Dictyostelium discoideum (Social amoeba).